Reading from the N-terminus, the 548-residue chain is Membrane protein insertase YidC (548 aa).

A run of 5 helical transmembrane segments spans residues 6-26 (NLIL…WESD), 349-369 (TVFQ…TLLV), 424-444 (LGGC…YWAL), 455-475 (FALW…PILM), and 503-523 (PIIF…YWLV).

It belongs to the OXA1/ALB3/YidC family. Type 1 subfamily. In terms of assembly, interacts with the Sec translocase complex via SecD. Specifically interacts with transmembrane segments of nascent integral membrane proteins during membrane integration.

The protein localises to the cell inner membrane. Functionally, required for the insertion and/or proper folding and/or complex formation of integral membrane proteins into the membrane. Involved in integration of membrane proteins that insert both dependently and independently of the Sec translocase complex, as well as at least some lipoproteins. Aids folding of multispanning membrane proteins. This is Membrane protein insertase YidC from Aeromonas salmonicida (strain A449).